The primary structure comprises 207 residues: Guanylate kinase (207 aa).

Residues 3 to 181 (GQLFVICGPS…AVEMVVSIVR (179 aa)) enclose the Guanylate kinase-like domain. Residue 10 to 17 (GPSGAGKT) coordinates ATP.

The protein belongs to the guanylate kinase family.

It is found in the cytoplasm. The enzyme catalyses GMP + ATP = GDP + ADP. Its function is as follows. Essential for recycling GMP and indirectly, cGMP. The polypeptide is Guanylate kinase (gmk) (Thermotoga maritima (strain ATCC 43589 / DSM 3109 / JCM 10099 / NBRC 100826 / MSB8)).